Consider the following 129-residue polypeptide: Glycine cleavage system H protein (129 aa).

The 83-residue stretch at 24–106 folds into the Lipoyl-binding domain; sequence TYTVGITEHA…YTGGWIFKIK (83 aa). K65 carries the N6-lipoyllysine modification.

It belongs to the GcvH family. The glycine cleavage system is composed of four proteins: P, T, L and H. It depends on (R)-lipoate as a cofactor.

The glycine cleavage system catalyzes the degradation of glycine. The H protein shuttles the methylamine group of glycine from the P protein to the T protein. This chain is Glycine cleavage system H protein, found in Salmonella choleraesuis (strain SC-B67).